Here is a 372-residue protein sequence, read N- to C-terminus: Cyclin-A3-2 (372 aa).

Residues Asn53–Ile73 are disordered.

It belongs to the cyclin family. Cyclin AB subfamily.

The chain is Cyclin-A3-2 (CYCA3-2) from Arabidopsis thaliana (Mouse-ear cress).